The primary structure comprises 343 residues: Dihydroorotase (343 aa).

2 residues coordinate Zn(2+): His-13 and His-15. Substrate-binding positions include 15 to 17 (HLR) and Asn-41. Residues Lys-99, His-136, and His-174 each contribute to the Zn(2+) site. At Lys-99 the chain carries N6-carboxylysine. His-136 contributes to the substrate binding site. Leu-219 provides a ligand contact to substrate. Position 247 (Asp-247) interacts with Zn(2+). The active site involves Asp-247. Substrate-binding residues include His-251 and Ala-263.

Belongs to the metallo-dependent hydrolases superfamily. DHOase family. Class II DHOase subfamily. As to quaternary structure, homodimer. Zn(2+) is required as a cofactor.

It carries out the reaction (S)-dihydroorotate + H2O = N-carbamoyl-L-aspartate + H(+). It participates in pyrimidine metabolism; UMP biosynthesis via de novo pathway; (S)-dihydroorotate from bicarbonate: step 3/3. Catalyzes the reversible cyclization of carbamoyl aspartate to dihydroorotate. The sequence is that of Dihydroorotase from Alkalilimnicola ehrlichii (strain ATCC BAA-1101 / DSM 17681 / MLHE-1).